Here is a 212-residue protein sequence, read N- to C-terminus: Peptide methionine sulfoxide reductase MsrA (212 aa).

A compositionally biased stretch (polar residues) spans 1–14 (MSSIDKTQRITQSD). The disordered stretch occupies residues 1–21 (MSSIDKTQRITQSDALPGRST). Cys52 is an active-site residue.

The protein belongs to the MsrA Met sulfoxide reductase family.

It catalyses the reaction L-methionyl-[protein] + [thioredoxin]-disulfide + H2O = L-methionyl-(S)-S-oxide-[protein] + [thioredoxin]-dithiol. The catalysed reaction is [thioredoxin]-disulfide + L-methionine + H2O = L-methionine (S)-S-oxide + [thioredoxin]-dithiol. Its function is as follows. Has an important function as a repair enzyme for proteins that have been inactivated by oxidation. Catalyzes the reversible oxidation-reduction of methionine sulfoxide in proteins to methionine. This chain is Peptide methionine sulfoxide reductase MsrA, found in Pectobacterium carotovorum subsp. carotovorum (strain PC1).